We begin with the raw amino-acid sequence, 722 residues long: MIALKATEMQHNNNALQQQQQLQHQLLQQHQQQHQQQLQQQLNSPDNNYIWATTHNANISRNNAMLQLQQQQLRAPWITDCNKQHHINNNNSMNVNYNQQLTQQPQQQQQQTQYMQHNYNNYTQQQQQQHLVPATTSQSNSHFYQCNQQQQQQQFLAPTTTTAAVVVAAAHQQHQTQQQHQSQQQQQHQRQDYASLQMGRQLGNFETGQSVLTLTTPTLTPTTTRNIEDTLGHLLSDTQTDRVAGCAGFAVPKVLPNAIDVLGMGIPTGVSSLPLQQTFDLSLGQGSESEDSNASYNDTQMNEEQDTTDTSSAHTDSTSYQAGHIMAGSVNGGGVNNFSNVLAAVSSSRGSASVGSSNANTSNTPARRGGGRRPNRSTNMTPEEEQKRAVRRERNKQAAARCRKRRVDQTNELTEEVEQLEKRGESMRKEIEVLTNSKNQLEYLLATHRATCQKIRSDMLSVVTCNGLIAPAGLLSAGSSGSGASSHHNHNSNDSSNGTITGMDATLNSTGRSNSPLDLKPAANIDSLLMHIKDEPLDGAIDSGSSLDQDGPPPSKRITLPPMSTMPHVHLSTILTPTGASSGSLQTPITSTAPGGFGSAFPVTSNGSSINNINSIGNNMNSPTLNAHNKVPKERPNTLAFQRPLGQMHLTMANNKAGGPTQIQGVPIQTPSTGTFNFDSLMDGGTGLTPVSGPLVPNSSSTNKHPLELPTPTAEPSKLVSL.

Residues 173–188 show a composition bias toward low complexity; sequence QHQTQQQHQSQQQQQH. 3 disordered regions span residues 173-193, 283-317, and 350-407; these read QHQT…RQDY, LGQG…HTDS, and GSAS…KRRV. Residues 283-300 show a composition bias toward polar residues; that stretch reads LGQGSESEDSNASYNDTQ. Low complexity-rich tracts occupy residues 308-317 and 350-364; these read TDTSSAHTDS and GSAS…TSNT. A bZIP domain is found at 385–448; sequence EQKRAVRRER…NQLEYLLATH (64 aa). The segment at 387–406 is basic motif; the sequence is KRAVRRERNKQAAARCRKRR. Residues 413–420 form a leucine-zipper region; it reads LTEEVEQL. Residues 477–498 show a composition bias toward low complexity; the sequence is AGSSGSGASSHHNHNSNDSSNG. 2 disordered regions span residues 477–519 and 683–722; these read AGSS…PLDL and DGGT…LVSL. The span at 506 to 516 shows a compositional bias: polar residues; it reads TLNSTGRSNSP. Residue Ser515 is modified to Phosphoserine.

It belongs to the bZIP family. Fos subfamily. As to quaternary structure, homodimer. Heterodimer with Jra. The kay-Jra heterodimer binds more stably to the AP-1 site than either of the two proteins alone.

The protein localises to the nucleus. Developmentally regulated transcription factor AP-1 binds and recognizes the enhancer DNA sequence: 5'-TGA[CG]TCA-3'. May play a role in the function or determination of a particular subset of cells in the developing embryo. It is able to carry out its function either independently of or in conjunction with Jra. This is Transcription factor kayak, isoforms D/sro from Drosophila melanogaster (Fruit fly).